We begin with the raw amino-acid sequence, 398 residues long: uncharacterized protein (398 aa).

10 helical membrane-spanning segments follow: residues 43–65 (PILP…VGGL), 89–108 (IFVV…LGLS), 156–173 (TAGA…ILYL), 180–198 (IILI…LYFV), 224–246 (LFIL…ILRA), 259–281 (IIIP…IPFG), 291–311 (SVLT…AYFI), 316–338 (LILL…KAYV), 351–373 (LGLF…GYLW), and 380–397 (TFLY…LLLF).

It belongs to the major facilitator superfamily.

It localises to the cell membrane. This is an uncharacterized protein from Methanocaldococcus jannaschii (strain ATCC 43067 / DSM 2661 / JAL-1 / JCM 10045 / NBRC 100440) (Methanococcus jannaschii).